Here is a 93-residue protein sequence, read N- to C-terminus: Exodeoxyribonuclease 7 small subunit (93 aa).

Residues 1-17 (MAKSSASSLSSAKPVAA) show a composition bias toward low complexity. The segment at 1–22 (MAKSSASSLSSAKPVAAGPDAS) is disordered.

Belongs to the XseB family. As to quaternary structure, heterooligomer composed of large and small subunits.

It is found in the cytoplasm. It carries out the reaction Exonucleolytic cleavage in either 5'- to 3'- or 3'- to 5'-direction to yield nucleoside 5'-phosphates.. Functionally, bidirectionally degrades single-stranded DNA into large acid-insoluble oligonucleotides, which are then degraded further into small acid-soluble oligonucleotides. The protein is Exodeoxyribonuclease 7 small subunit of Polaromonas naphthalenivorans (strain CJ2).